The sequence spans 510 residues: MSKSPVAIIILDGFGKRAETVGNAVAQANKPNFDRYWANFPHGELKAAGLDVGLPEGQMGNSEVGHTNIGAGRIVYQSLTRIDKAIEEGEFQENKALNNAFTHTKENNSDLHLFGLLSDGGVHSHINHLVALLETAKDKGVKNVYIHAFLDGRDVAPQSSLEYLETLEKAISDLNYGAIATVSGRFYAMDRDKRWERVEKAYKAIVSAEGEKFEDPIELVKASYANDKNDEFVVPAIITKDGKPVATVKDNDAVIFFNFRPDRAIQLSNAFTDKEWDHFDRGANHPKNIKFVTMTLYNPSIDAEVAFEPIEMKNVIGEVLSNEGLSQLRIAETEKYPHVTFFMNGGRNEEFPGENRILINSPKVETYDLKPEMSAYEVTDALVEDIKNDKHDAIILNFANPDMVGHSGMLEPTIKAIEAVDENLGRVVDLILEKGGSAIIFADHGNSETMSTPEGKPHTAHTTVPVPVIVTKKGVTLREGGRLADVAPTMLDLLGVKKPAEMTGESLIQK.

Mn(2+)-binding residues include Asp12 and Ser62. Residue Ser62 is the Phosphoserine intermediate of the active site. Substrate-binding positions include His123, 153–154 (RD), Arg185, Arg191, 260–263 (RPDR), and Lys335. 5 residues coordinate Mn(2+): Asp402, His406, Asp443, His444, and His461.

This sequence belongs to the BPG-independent phosphoglycerate mutase family. Monomer. It depends on Mn(2+) as a cofactor.

It catalyses the reaction (2R)-2-phosphoglycerate = (2R)-3-phosphoglycerate. It functions in the pathway carbohydrate degradation; glycolysis; pyruvate from D-glyceraldehyde 3-phosphate: step 3/5. Catalyzes the interconversion of 2-phosphoglycerate and 3-phosphoglycerate. In Listeria innocua serovar 6a (strain ATCC BAA-680 / CLIP 11262), this protein is 2,3-bisphosphoglycerate-independent phosphoglycerate mutase.